The following is a 177-amino-acid chain: FANCD2 opposite strand protein (177 aa).

The protein is FANCD2 opposite strand protein (FANCD2OS) of Homo sapiens (Human).